Reading from the N-terminus, the 455-residue chain is MWLELVLASLLGFVIYWFVSRDKEETLPLGDGWWGPGSKPSAKEDESIRPFKVETSDEEIKDLHQRIDRFRASPPLEGSRFHYGFNSNYMKKVVSYWRNEFDWRKQVEILNQYPHFKTKIEGLDIHFIHVKPPQLPSGRTPKPLLMVHGWPGSFYEFYKIIPLLTDPKSHGLSDEHVFEVICPSIPGYGYSEASSKKGLNSVATARIFYKLMTRLGFQKFYIQGGDWGSLICTNMAQMVPNHVKGLHLNMAFISRSFYTMTPLLGQRFGRFLGYTEKDIELLYPYKEKVFYSIMRESGYLHIQATKPDTVGCALNDSPVGLAAYILEKFSTWTKSEYRELEDGGLERKFSLDDLLVNIMIYWTTGTIVSSQRYYKENLGQGIMVHKHEGMKVFVPTGFSAFPSELLHAPEKWVKVKYPKLISYSYMERGGHFAAFEEPKLLAQDIRKFVSLAELQ.

The helical; Signal-anchor for type III membrane protein transmembrane segment at 1–21 threads the bilayer; the sequence is MWLELVLASLLGFVIYWFVSR. The Cytoplasmic segment spans residues 22–455; the sequence is DKEETLPLGD…RKFVSLAELQ (434 aa). Aspartate 226 (nucleophile) is an active-site residue. At arginine 295 the chain carries Dimethylated arginine. Tyrosine 374 functions as the Proton donor in the catalytic mechanism. The Proton acceptor role is filled by histidine 431. Lysine 439 carries the N6-acetyllysine modification.

It belongs to the peptidase S33 family.

The protein resides in the microsome membrane. Its subcellular location is the endoplasmic reticulum membrane. The enzyme catalyses cis-stilbene oxide + H2O = (1R,2R)-hydrobenzoin. It catalyses the reaction 1-(4-methoxyphenyl)-N-methyl-N-[(3-methyloxetan-3-yl)methyl]methanamine + H2O = 2-{[(4-methoxybenzyl)(methyl)amino]methyl}-2-methylpropane-1,3-diol. It carries out the reaction 8,9-epoxy-(5Z,11Z,14Z)-eicosatrienoate + H2O = 8,9-dihydroxy-(5Z,11Z,14Z)-eicosatrienoate. The catalysed reaction is 11,12-epoxy-(5Z,8Z,14Z)-eicosatrienoate + H2O = 11,12-dihydroxy-(5Z,8Z,14Z)-eicosatrienoate. The enzyme catalyses 2-(5Z,8Z,11Z,14Z-eicosatetraenoyl)-glycerol + H2O = glycerol + (5Z,8Z,11Z,14Z)-eicosatetraenoate + H(+). Its activity is regulated as follows. Inhibited by 10-hydroxystearamide and methoxy-arachidonyl fluorophosphate. Its function is as follows. Biotransformation enzyme that catalyzes the hydrolysis of arene and aliphatic epoxides to less reactive and more water soluble dihydrodiols by the trans addition of water. May play a role in the metabolism of endogenous lipids such as epoxide-containing fatty acids. Metabolizes the abundant endocannabinoid 2-arachidonoylglycerol (2-AG) to free arachidonic acid (AA) and glycerol. Binds 20(S)-hydroxycholesterol (20(S)-OHC). This Rattus norvegicus (Rat) protein is Epoxide hydrolase 1.